Here is a 343-residue protein sequence, read N- to C-terminus: MSVVKVGVNGFGTIGRRVALAITLQKDMKLVGVVKRTPDYAALYAASRGIPIYTPTAKEAEEFEKRGIKVGGTLRELLARVDVVVDATPEGQGAKNKPLYREAGVKQVYQGGEKPEVAEASFSTLCNYEESKGRGSLRVVSCNTTGLLRLICTLNREFGVESVRAVLVRRGADPKEVKKGPIDSIVLNPPTLPSHHAVDVRTVLPWLDIKTAAVAVPTTFMHMHHVTLKLAKPVEKREVLETLASAPRIMLVSSGDTGIKSTSQLVDAARLSRMGYDIPELVVFEESVAVDGREVMLFQAVHQESIVVPENIDAIRAVASSPLTLDETLKATDGSLGLRKTLW.

Residues 13–14 (TI) and glycine 112 each bind NAD(+). Position 141–143 (141–143 (SCN)) interacts with D-glyceraldehyde 3-phosphate. Cysteine 142 functions as the Nucleophile in the catalytic mechanism. Residue arginine 170 coordinates NAD(+). Residue 196-197 (HA) coordinates D-glyceraldehyde 3-phosphate. Residue glutamine 303 coordinates NAD(+).

The protein belongs to the glyceraldehyde-3-phosphate dehydrogenase family. In terms of assembly, homotetramer.

It is found in the cytoplasm. It catalyses the reaction D-glyceraldehyde 3-phosphate + phosphate + NADP(+) = (2R)-3-phospho-glyceroyl phosphate + NADPH + H(+). The enzyme catalyses D-glyceraldehyde 3-phosphate + phosphate + NAD(+) = (2R)-3-phospho-glyceroyl phosphate + NADH + H(+). The protein operates within carbohydrate degradation; glycolysis; pyruvate from D-glyceraldehyde 3-phosphate: step 1/5. In Aeropyrum pernix (strain ATCC 700893 / DSM 11879 / JCM 9820 / NBRC 100138 / K1), this protein is Glyceraldehyde-3-phosphate dehydrogenase (gap).